Reading from the N-terminus, the 269-residue chain is Intercellular adhesion molecule 4 (269 aa).

A signal peptide spans 1 to 20 (SLFPLSLLFFLAAAYPGVGS). Residues 21 to 238 (ALGRRTKRAQ…MLAWSSAPTA (218 aa)) lie on the Extracellular side of the membrane. 2 Ig-like C2-type domains span residues 60-122 (GKSV…TRWA) and 144-215 (GRKY…LNLD). 4 N-linked (GlcNAc...) asparagine glycosylation sites follow: Asn66, Asn76, Asn188, and Asn221. 4 cysteine pairs are disulfide-bonded: Cys67–Cys111, Cys67–Cys115, Cys71–Cys115, and Cys151–Cys208. The chain crosses the membrane as a helical span at residues 239-259 (LASVSIAALVGILLTVGAAYL). At 260–269 (CKCLAMKSQA) the chain is on the cytoplasmic side.

This sequence belongs to the immunoglobulin superfamily. ICAM family. N- and O-glycosylated.

Its subcellular location is the cell membrane. ICAM proteins are ligands for the leukocyte adhesion protein LFA-1 (integrin alpha-L/beta-2). ICAM4 is also a ligand for alpha-4/beta-1 and alpha-V integrins. The chain is Intercellular adhesion molecule 4 (ICAM4) from Pan troglodytes (Chimpanzee).